Consider the following 194-residue polypeptide: Endo-1,4-beta-xylanase (194 aa).

Gly-1 carries the post-translational modification N-acetylglycine. One can recognise a GH11 domain in the interval 1 to 191 (GTTPNSEGWH…SSGYARITVA (191 aa)). The Nucleophile role is filled by Glu-86. Cysteines 110 and 154 form a disulfide. Glu-178 acts as the Proton donor in catalysis.

The protein belongs to the glycosyl hydrolase 11 (cellulase G) family.

It carries out the reaction Endohydrolysis of (1-&gt;4)-beta-D-xylosidic linkages in xylans.. The protein operates within glycan degradation; xylan degradation. In Byssochlamys spectabilis (Paecilomyces variotii), this protein is Endo-1,4-beta-xylanase.